We begin with the raw amino-acid sequence, 258 residues long: Phosphate import ATP-binding protein PstB (258 aa).

The ABC transporter domain occupies 5 to 247 (IDVSGLNAYY…ERIFSNPSVQ (243 aa)). Position 37–44 (37–44 (GPSGCGKS)) interacts with ATP.

The protein belongs to the ABC transporter superfamily. Phosphate importer (TC 3.A.1.7) family. The complex is composed of two ATP-binding proteins (PstB), two transmembrane proteins (PstC and PstA) and a solute-binding protein (PstS).

It is found in the cell membrane. It catalyses the reaction phosphate(out) + ATP + H2O = ADP + 2 phosphate(in) + H(+). In terms of biological role, part of the ABC transporter complex PstSACB involved in phosphate import. Responsible for energy coupling to the transport system. The polypeptide is Phosphate import ATP-binding protein PstB (Streptomyces coelicolor (strain ATCC BAA-471 / A3(2) / M145)).